The primary structure comprises 474 residues: ATP synthase subunit beta (474 aa).

An ATP-binding site is contributed by Gly-152–Thr-159.

It belongs to the ATPase alpha/beta chains family. F-type ATPases have 2 components, CF(1) - the catalytic core - and CF(0) - the membrane proton channel. CF(1) has five subunits: alpha(3), beta(3), gamma(1), delta(1), epsilon(1). CF(0) has three main subunits: a(1), b(2) and c(9-12). The alpha and beta chains form an alternating ring which encloses part of the gamma chain. CF(1) is attached to CF(0) by a central stalk formed by the gamma and epsilon chains, while a peripheral stalk is formed by the delta and b chains.

It is found in the cell inner membrane. The enzyme catalyses ATP + H2O + 4 H(+)(in) = ADP + phosphate + 5 H(+)(out). Functionally, produces ATP from ADP in the presence of a proton gradient across the membrane. The catalytic sites are hosted primarily by the beta subunits. This Paramagnetospirillum magneticum (strain ATCC 700264 / AMB-1) (Magnetospirillum magneticum) protein is ATP synthase subunit beta.